The sequence spans 521 residues: Glutamate--cysteine ligase (521 aa).

The protein belongs to the glutamate--cysteine ligase type 1 family. Type 1 subfamily.

It carries out the reaction L-cysteine + L-glutamate + ATP = gamma-L-glutamyl-L-cysteine + ADP + phosphate + H(+). Its pathway is sulfur metabolism; glutathione biosynthesis; glutathione from L-cysteine and L-glutamate: step 1/2. In Aliivibrio salmonicida (strain LFI1238) (Vibrio salmonicida (strain LFI1238)), this protein is Glutamate--cysteine ligase.